Here is a 182-residue protein sequence, read N- to C-terminus: ADP-ribosylation factor 1 (182 aa).

A lipid anchor (N-myristoyl glycine) is attached at glycine 2. GTP-binding positions include 24-31, 67-71, and 126-129; these read GLDNAGKT, DLGGQ, and NKQD.

The protein belongs to the small GTPase superfamily. Arf family.

The protein localises to the golgi apparatus. It catalyses the reaction GTP + H2O = GDP + phosphate + H(+). In terms of biological role, GTP-binding protein involved in protein trafficking; may modulate vesicle budding and uncoating within the Golgi apparatus. This is ADP-ribosylation factor 1 (ARF1) from Brassica rapa subsp. pekinensis (Chinese cabbage).